A 469-amino-acid polypeptide reads, in one-letter code: Protein RUFY3 (469 aa).

2 positions are modified to phosphothreonine: Thr5 and Thr12. Phosphoserine occurs at positions 34 and 49. Phosphothreonine is present on Thr51. Residues 95-227 (DSDYAPLQQF…IDANFCMKGE (133 aa)) form the RUN domain. 2 coiled-coil regions span residues 271–362 (NRHL…VEKE) and 422–463 (KSEL…AANK).

Interacts with PAK1. Interacts (via C-terminus) with Ras-related Rab-5 proteins. Interacts (via C-terminus) with Ras-related Rap-2 proteins. Interacts with PIK3CA and PIK3R1. Interacts (via N-terminus) with FSCN1; this interaction induces neuron axon development. Interacts with DBN1. Interacts (via the second coiled coil) with GTP-, but not GDP-bound ARL8A and ARL8B. Interacts with dynactin/DCTN1 and the dynein intermediate chain DYNC1I1/2. Directly interacts with DYNC1LI1. Phosphorylated by PAK1.

It is found in the cytoplasm. Its subcellular location is the endomembrane system. The protein resides in the cell projection. It localises to the invadopodium. The protein localises to the growth cone. It is found in the perikaryon. Its subcellular location is the filopodium. The protein resides in the lamellipodium. It localises to the lysosome. Its function is as follows. ARL8 effector that promotes the coupling of endolysosomes to dynein-dynactin for retrograde transport along microtubules. Acts by binding both GTP-bound ARL8 and dynein-dynactin. In nonneuronal cells, promotes concentration of endolysosomes in the juxtanuclear area. In hippocampal neurons, drives retrograde transport of endolysosomes from the axon to the soma. Plays a role in the generation of neuronal polarity formation and axon growth. Implicated in the formation of a single axon by developing neurons. May inhibit the formation of additional axons by inhibition of PI3K in minor neuronal processes. Plays a role in the formation of F-actin-enriched protrusive structures at the cell periphery. Plays a role in cytoskeletal organization by regulating the subcellular localization of FSCN1 and DBN1 at axonal growth cones. In Pongo abelii (Sumatran orangutan), this protein is Protein RUFY3.